The primary structure comprises 302 residues: Vacuolar protein sorting-associated protein 26A (302 aa).

This sequence belongs to the VPS26 family. In terms of assembly, component of the retromer complex which consists of VPS29 (MAG1), VPS26 (VPS26A or VPS26B), VPS35 (VPS35A or VPS35B or VPS35C), VPS5/17 (SNX1 or SNX2A or SNX2B). Component of a retromer subcomplex consisting of VPS29 (MAG1), VPS26 (VPS26A or VPS26B), VPS35 (VPS35A or VPS35B or VPS35C).

It localises to the cytoplasm. The protein resides in the endosome membrane. The protein localises to the prevacuolar compartment membrane. It is found in the golgi apparatus. Its subcellular location is the trans-Golgi network membrane. Plays a role in vesicular protein sorting. Component of the membrane-associated retromer complex which is essential in endosome-to-Golgi retrograde transport. The VPS29-VPS26-VPS35 subcomplex may be involved in recycling of specific cargos from endosome to the plasma membrane. This Arabidopsis thaliana (Mouse-ear cress) protein is Vacuolar protein sorting-associated protein 26A (VPS26A).